Here is a 456-residue protein sequence, read N- to C-terminus: Choline kinase (456 aa).

The protein belongs to the choline/ethanolamine kinase family. In terms of assembly, monomer. Mg(2+) is required as a cofactor.

It localises to the cytoplasm. It is found in the nucleus. The catalysed reaction is choline + ATP = phosphocholine + ADP + H(+). It participates in phospholipid metabolism; phosphatidylcholine biosynthesis; phosphocholine from choline: step 1/1. Its function is as follows. Catalyzes the committed step in the synthesis of phosphatidylcholine by the CDP-choline pathway. In Schizosaccharomyces pombe (strain 972 / ATCC 24843) (Fission yeast), this protein is Choline kinase.